The primary structure comprises 261 residues: Guanine nucleotide exchange factor BopE (261 aa).

The protein belongs to the GEF (guanine exchange factor) SopE family. In terms of assembly, monomer. Interacts with human CDC42.

It is found in the secreted. Functionally, activator for both CDC42 and RAC1 by directly interacting with these Rho GTPases and acting as a guanine nucleotide exchange factor (GEF). This activation results in actin cytoskeleton rearrangements and stimulates membrane ruffling, thus promoting bacterial entry into non-phagocytic cells. This chain is Guanine nucleotide exchange factor BopE (bopE), found in Burkholderia pseudomallei (strain 1710b).